The following is a 492-amino-acid chain: Ketol-acid reductoisomerase (NADP(+)) (492 aa).

Residues 14–208 enclose the KARI N-terminal Rossmann domain; that stretch reads LDQLGRCRFM…GGHKAGVLES (195 aa). Residues 45–48, R68, R76, S78, and 108–110 each bind NADP(+); these read CGAQ and DKQ. H132 is a catalytic residue. G158 is an NADP(+) binding site. KARI C-terminal knotted domains lie at 209–344 and 345–485; these read SFVA…NAPK and YDGK…MTDM. Mg(2+)-binding residues include D217, E221, E389, and E393. Residue S414 coordinates substrate.

It belongs to the ketol-acid reductoisomerase family. Mg(2+) is required as a cofactor.

It carries out the reaction (2R)-2,3-dihydroxy-3-methylbutanoate + NADP(+) = (2S)-2-acetolactate + NADPH + H(+). The catalysed reaction is (2R,3R)-2,3-dihydroxy-3-methylpentanoate + NADP(+) = (S)-2-ethyl-2-hydroxy-3-oxobutanoate + NADPH + H(+). It participates in amino-acid biosynthesis; L-isoleucine biosynthesis; L-isoleucine from 2-oxobutanoate: step 2/4. It functions in the pathway amino-acid biosynthesis; L-valine biosynthesis; L-valine from pyruvate: step 2/4. In terms of biological role, involved in the biosynthesis of branched-chain amino acids (BCAA). Catalyzes an alkyl-migration followed by a ketol-acid reduction of (S)-2-acetolactate (S2AL) to yield (R)-2,3-dihydroxy-isovalerate. In the isomerase reaction, S2AL is rearranged via a Mg-dependent methyl migration to produce 3-hydroxy-3-methyl-2-ketobutyrate (HMKB). In the reductase reaction, this 2-ketoacid undergoes a metal-dependent reduction by NADPH to yield (R)-2,3-dihydroxy-isovalerate. The protein is Ketol-acid reductoisomerase (NADP(+)) of Haemophilus influenzae (strain 86-028NP).